Reading from the N-terminus, the 549-residue chain is Cilia- and flagella-associated protein 45 (549 aa).

The segment at 1-29 (MPLSPAGVLSSTSTASNRSRNRPRYRTKA) is disordered. Coiled coils occupy residues 119 to 232 (REEL…MMEV), 259 to 393 (IVEQ…KRNQ), and 434 to 522 (AVQV…KIEE). The disordered stretch occupies residues 388-416 (RAKRNQEVADREWRRKEKENAQKKMETEA).

The protein belongs to the CFAP45 family. As to quaternary structure, microtubule inner protein component of sperm flagellar doublet microtubules. Interacts with AK8; dimerization with AK8 may create a cavity at the interface of the dimer that can accommodate AMP. Interacts with CFAP52. Interacts with ENKUR. Directly interacts with DNALI1. Interacts with DNAH11. Interacts with DNAI1. Expressed in respiratory cells (at protein level).

It is found in the cytoplasm. The protein resides in the cytoskeleton. It localises to the cilium axoneme. Its subcellular location is the flagellum axoneme. The protein localises to the cell projection. It is found in the cilium. The protein resides in the flagellum. Microtubule inner protein (MIP) part of the dynein-decorated doublet microtubules (DMTs) in cilia axoneme, which is required for motile cilia beating. It is an AMP-binding protein that may facilitate dynein ATPase-dependent ciliary and flagellar beating via adenine nucleotide homeostasis. May function as a donor of AMP to AK8 and hence promote ADP production. In Sus scrofa (Pig), this protein is Cilia- and flagella-associated protein 45 (CFAP45).